We begin with the raw amino-acid sequence, 333 residues long: Thiamine-monophosphate kinase (333 aa).

The Mg(2+) site is built by Asp44, Ser58, Thr59, and Asp60. His67 serves as a coordination point for substrate. 2 residues coordinate Mg(2+): Asp89 and Asp137. Residues Gly136–Asp137 and Arg162 contribute to the ATP site. Asp224 is a Mg(2+) binding site. Ser226 serves as a coordination point for ATP. Asp227 contributes to the Mg(2+) binding site. Residues Glu278 and Trp320 each contribute to the substrate site.

The protein belongs to the thiamine-monophosphate kinase family.

The enzyme catalyses thiamine phosphate + ATP = thiamine diphosphate + ADP. The protein operates within cofactor biosynthesis; thiamine diphosphate biosynthesis; thiamine diphosphate from thiamine phosphate: step 1/1. In terms of biological role, catalyzes the ATP-dependent phosphorylation of thiamine-monophosphate (TMP) to form thiamine-pyrophosphate (TPP), the active form of vitamin B1. The sequence is that of Thiamine-monophosphate kinase from Mycobacterium tuberculosis (strain CDC 1551 / Oshkosh).